The sequence spans 567 residues: 2-succinyl-5-enolpyruvyl-6-hydroxy-3-cyclohexene-1-carboxylate synthase (567 aa).

This sequence belongs to the TPP enzyme family. MenD subfamily. In terms of assembly, homodimer. Requires Mg(2+) as cofactor. It depends on Mn(2+) as a cofactor. The cofactor is thiamine diphosphate.

The catalysed reaction is isochorismate + 2-oxoglutarate + H(+) = 5-enolpyruvoyl-6-hydroxy-2-succinyl-cyclohex-3-ene-1-carboxylate + CO2. It functions in the pathway quinol/quinone metabolism; 1,4-dihydroxy-2-naphthoate biosynthesis; 1,4-dihydroxy-2-naphthoate from chorismate: step 2/7. Its pathway is quinol/quinone metabolism; menaquinone biosynthesis. In terms of biological role, catalyzes the thiamine diphosphate-dependent decarboxylation of 2-oxoglutarate and the subsequent addition of the resulting succinic semialdehyde-thiamine pyrophosphate anion to isochorismate to yield 2-succinyl-5-enolpyruvyl-6-hydroxy-3-cyclohexene-1-carboxylate (SEPHCHC). The polypeptide is 2-succinyl-5-enolpyruvyl-6-hydroxy-3-cyclohexene-1-carboxylate synthase (Yersinia pseudotuberculosis serotype O:1b (strain IP 31758)).